The chain runs to 300 residues: uncharacterized protein (300 aa).

The segment covering 1 to 19 has biased composition (basic and acidic residues); it reads MATKRAHPEDETHESKRAA. A disordered region spans residues 1 to 20; it reads MATKRAHPEDETHESKRAAQ.

This is an uncharacterized protein from Orgyia pseudotsugata multicapsid polyhedrosis virus (OpMNPV).